We begin with the raw amino-acid sequence, 221 residues long: 2,3-bisphosphoglycerate-dependent phosphoglycerate mutase (221 aa).

Substrate contacts are provided by residues 8-15 (RHGNSLWN), 21-22 (TG), Arg-60, 87-90 (ERHY), Lys-98, 114-115 (RR), and 174-175 (GN). His-9 acts as the Tele-phosphohistidine intermediate in catalysis. The active-site Proton donor/acceptor is the Glu-87. Residues 114–140 (RRGYDTPPPPLHSQADDPRYEEPPPLS) are disordered.

It belongs to the phosphoglycerate mutase family. BPG-dependent PGAM subfamily.

The enzyme catalyses (2R)-2-phosphoglycerate = (2R)-3-phosphoglycerate. It participates in carbohydrate degradation; glycolysis; pyruvate from D-glyceraldehyde 3-phosphate: step 3/5. Catalyzes the interconversion of 2-phosphoglycerate and 3-phosphoglycerate. The protein is 2,3-bisphosphoglycerate-dependent phosphoglycerate mutase of Tropheryma whipplei (strain TW08/27) (Whipple's bacillus).